We begin with the raw amino-acid sequence, 1585 residues long: uncharacterized protein (1585 aa).

The stretch at 12 to 59 (DKISRKLRMIQGNAERLKRAANGPLIFEAEDRTERVMRQIDRSANRLT) forms a coiled coil. 2 disordered regions span residues 586–627 (PKRT…SLPR) and 645–692 (IRRR…NPTR). Residues 618-627 (TATGPTSLPR) show a composition bias toward polar residues. Residues 645-655 (IRRRRGKRVLG) show a composition bias toward basic residues. Positions 661–672 (NRMNPSDSSIAV) are enriched in polar residues. Phosphoserine is present on residues serine 970 and serine 972.

It to B.subtilis XkdO.

This is an uncharacterized protein from Bacillus subtilis (strain 168).